The chain runs to 237 residues: Regulator of G-protein signaling 9-binding protein (237 aa).

The Cytoplasmic portion of the chain corresponds to 1 to 214 (MAKEECKALL…TGPCDLSKAK (214 aa)). Coiled coils occupy residues 29–58 (GSADSQNLREELQKTRQKAQELAVAIRLRL) and 144–169 (VEDLHQLEREILQVGEMIQDMEMKVN). Residues 153-202 (EILQVGEMIQDMEMKVNVPRWTVQARQAAGAELLSSASAGVSSVGGVSVE) form an SNARE-like region. Residues 215 to 234 (AATIFSAVLLAAVALAVCVA) traverse the membrane as a helical; Anchor for type IV membrane protein segment. Over 235–237 (KLS) the chain is Extracellular.

It belongs to the RGS7BP/RGS9BP family. Specifically interacts with isoform RGS9-1 of RGS9. Component of the RGS9-1-Gbeta5 complex composed of RGS9-1, Gbeta5 (GNB5) and RGS9BP. In terms of tissue distribution, specifically expressed in the retina. Only present in photoreceptors (at protein level).

It localises to the membrane. Functionally, regulator of G protein-coupled receptor (GPCR) signaling in phototransduction. Participates in the recovery phase of visual transduction via its interaction with RGS9-1 isoform. Acts as a membrane-anchor that mediates the targeting of RGS9-1 to the photoreceptor outer segment, where phototransduction takes place. Enhances the ability of RGS9-1 to stimulate G protein GTPase activity, allowing the visual signal to be terminated on the physiologically time scale. It also controls the proteolytic stability of RGS9-1, probably by protecting it from degradation. The protein is Regulator of G-protein signaling 9-binding protein (RGS9BP) of Bos taurus (Bovine).